Consider the following 2185-residue polypeptide: Genome polyprotein (2185 aa).

The N-myristoyl glycine; by host moiety is linked to residue glycine 2. Topologically, residues 2 to 1495 (GAQVSTQKTG…HVSRAFICLQ (1494 aa)) are cytoplasmic. Positions 568 to 584 (FFQGPVEDAITAAIGRV) are amphipathic alpha-helix. Residues histidine 872 and aspartate 890 each act as for protease 2A activity in the active site. Zn(2+) is bound by residues cysteine 907 and cysteine 909. The active-site For protease 2A activity is the cysteine 961. Zn(2+) is bound by residues cysteine 967 and histidine 969. The segment at 1101-1173 (NNGWLKKFTE…EQSAPSQSDQ (73 aa)) is membrane-binding. Residues 1101–1239 (NNGWLKKFTE…SPGAGKSVAT (139 aa)) form an oligomerization region. The RNA-binding stretch occupies residues 1122–1126 (AIKIQ). The SF3 helicase domain maps to 1205–1361 (EKKMSNYIQF…SMYSQNGKIN (157 aa)). Zn(2+) contacts are provided by cysteine 1369, cysteine 1381, and cysteine 1386. A C4-type; degenerate zinc finger spans residues 1369 to 1386 (CDEECCPVNFKKCCPLVC). Positions 1413 to 1420 (EYNHRHSV) are RNA-binding. The interval 1424–1429 (LEALFQ) is oligomerization. The stretch at 1496–1511 (AITTFVSVAGIIYIIY) is an intramembrane region. Topologically, residues 1512–2185 (KLFAGFQGAY…TIRRKWLDSF (674 aa)) are cytoplasmic. Tyrosine 1521 is modified (O-(5'-phospho-RNA)-tyrosine). The Peptidase C3 domain maps to 1541–1719 (GPAFEFAVAM…FSAALLKHYF (179 aa)). Active-site for protease 3C activity residues include histidine 1580, glutamate 1611, and cysteine 1687. The region spanning 1950–2066 (GHLIAFDYSG…SYPWPIDASL (117 aa)) is the RdRp catalytic domain. Mg(2+) contacts are provided by aspartate 1956 and aspartate 2052.

Belongs to the picornaviruses polyprotein family. Interacts with capsid protein VP1 and capsid protein VP3 to form heterotrimeric protomers. In terms of assembly, interacts with capsid protein VP0, and capsid protein VP3 to form heterotrimeric protomers. Five protomers subsequently associate to form pentamers which serve as building blocks for the capsid. Interacts with capsid protein VP2, capsid protein VP3 and capsid protein VP4 following cleavage of capsid protein VP0. Interacts with host CD55. Interacts with host CXADR. As to quaternary structure, interacts with capsid protein VP1 and capsid protein VP3 in the mature capsid. Interacts with capsid protein VP0 and capsid protein VP1 to form heterotrimeric protomers. Five protomers subsequently associate to form pentamers which serve as building blocks for the capsid. Interacts with capsid protein VP4 in the mature capsid. Interacts with protein 2C; this interaction may be important for virion morphogenesis. In terms of assembly, interacts with capsid protein VP1 and capsid protein VP3. As to quaternary structure, homodimer. Homohexamer; forms a hexameric ring structure with 6-fold symmetry characteristic of AAA+ ATPases. Interacts (via N-terminus) with host RTN3 (via reticulon domain); this interaction is important for viral replication. Interacts with capsid protein VP3; this interaction may be important for virion morphogenesis. In terms of assembly, interacts with protein 3CD. As to quaternary structure, homodimer. Interacts with host GBF1. Interacts (via GOLD domain) with host ACBD3 (via GOLD domain); this interaction allows the formation of a viral protein 3A/ACBD3 heterotetramer with a 2:2 stoichiometry, which will stimulate the recruitment of host PI4KB in order to synthesize PI4P at the viral RNA replication sites. Interacts with RNA-directed RNA polymerase. In terms of assembly, interacts with host TICAM1 (via C-terminus). As to quaternary structure, interacts with protein 3AB and with RNA-directed RNA polymerase. Interacts with Viral protein genome-linked and with protein 3CD. Requires Mg(2+) as cofactor. In terms of processing, specific enzymatic cleavages in vivo by the viral proteases yield processing intermediates and the mature proteins. Post-translationally, myristoylation is required for the formation of pentamers during virus assembly. Further assembly of 12 pentamers and a molecule of genomic RNA generates the provirion. During virion maturation, immature virions are rendered infectious following cleavage of VP0 into VP4 and VP2. This maturation seems to be an autocatalytic event triggered by the presence of RNA in the capsid and it is followed by a conformational change infectious virion. In terms of processing, myristoylation is required during RNA encapsidation and formation of the mature virus particle. Post-translationally, VPg is uridylylated by the polymerase into VPg-pUpU. This acts as a nucleotide-peptide primer for the genomic RNA replication.

Its subcellular location is the virion. The protein localises to the host cytoplasm. The protein resides in the host cytoplasmic vesicle membrane. It is found in the host nucleus. The enzyme catalyses a ribonucleoside 5'-triphosphate + H2O = a ribonucleoside 5'-diphosphate + phosphate + H(+). It carries out the reaction Selective cleavage of Tyr-|-Gly bond in the picornavirus polyprotein.. The catalysed reaction is RNA(n) + a ribonucleoside 5'-triphosphate = RNA(n+1) + diphosphate. It catalyses the reaction Selective cleavage of Gln-|-Gly bond in the poliovirus polyprotein. In other picornavirus reactions Glu may be substituted for Gln, and Ser or Thr for Gly.. Replication or transcription is subject to high level of random mutations by the nucleotide analog ribavirin. Its function is as follows. Forms an icosahedral capsid of pseudo T=3 symmetry with capsid proteins VP2 and VP3. The capsid is 300 Angstroms in diameter, composed of 60 copies of each capsid protein and enclosing the viral positive strand RNA genome. Capsid protein VP1 mainly forms the vertices of the capsid. Capsid protein VP1 interacts with host cell receptors CD55 and CXADR to provide virion attachment to target host cells. This attachment induces virion internalization. Tyrosine kinases are probably involved in the entry process. After binding to its receptor, the capsid undergoes conformational changes. Capsid protein VP1 N-terminus (that contains an amphipathic alpha-helix) and capsid protein VP4 are externalized. Together, they shape a pore in the host membrane through which viral genome is translocated to host cell cytoplasm. In terms of biological role, forms an icosahedral capsid of pseudo T=3 symmetry with capsid proteins VP2 and VP3. The capsid is 300 Angstroms in diameter, composed of 60 copies of each capsid protein and enclosing the viral positive strand RNA genome. Functionally, lies on the inner surface of the capsid shell. After binding to the host receptor, the capsid undergoes conformational changes. Capsid protein VP4 is released, Capsid protein VP1 N-terminus is externalized, and together, they shape a pore in the host membrane through which the viral genome is translocated into the host cell cytoplasm. Component of immature procapsids, which is cleaved into capsid proteins VP4 and VP2 after maturation. Allows the capsid to remain inactive before the maturation step. Its function is as follows. Cysteine protease that cleaves viral polyprotein and specific host proteins. It is responsible for the autocatalytic cleavage between the P1 and P2 regions, which is the first cleavage occurring in the polyprotein. Also cleaves the host translation initiation factor EIF4G1, in order to shut down the capped cellular mRNA translation. Inhibits the host nucleus-cytoplasm protein and RNA trafficking by cleaving host members of the nuclear pores. Counteracts stress granule formation probably by antagonizing its assembly or promoting its dissassembly. Cleaves and inhibits host IFIH1/MDA5, thereby inhibiting the type-I IFN production and the establishment of the antiviral state. Cleaves and inhibits host MAVS, thereby inhibiting the type-I IFN production and the establishment of the antiviral state. In terms of biological role, plays an essential role in the virus replication cycle by acting as a viroporin. Creates a pore in the host endoplasmic reticulum and as a consequence releases Ca2+ in the cytoplasm of infected cell. In turn, high levels of cytoplasmic calcium may trigger membrane trafficking and transport of viral ER-associated proteins to viroplasms, sites of viral genome replication. Functionally, induces and associates with structural rearrangements of intracellular membranes. Displays RNA-binding, nucleotide binding and NTPase activities. May play a role in virion morphogenesis and viral RNA encapsidation by interacting with the capsid protein VP3. Localizes the viral replication complex to the surface of membranous vesicles. Together with protein 3CD binds the Cis-Active RNA Element (CRE) which is involved in RNA synthesis initiation. Acts as a cofactor to stimulate the activity of 3D polymerase, maybe through a nucleid acid chaperone activity. Its function is as follows. Localizes the viral replication complex to the surface of membranous vesicles. It inhibits host cell endoplasmic reticulum-to-Golgi apparatus transport and causes the disassembly of the Golgi complex, possibly through GBF1 interaction. This would result in depletion of MHC, trail receptors and IFN receptors at the host cell surface. Plays an essential role in viral RNA replication by recruiting ACBD3 and PI4KB at the viral replication sites, thereby allowing the formation of the rearranged membranous structures where viral replication takes place. In terms of biological role, acts as a primer for viral RNA replication and remains covalently bound to viral genomic RNA. VPg is uridylylated prior to priming replication into VPg-pUpU. The oriI viral genomic sequence may act as a template for this. The VPg-pUpU is then used as primer on the genomic RNA poly(A) by the RNA-dependent RNA polymerase to replicate the viral genome. During genome replication, the VPg-RNA linkage is removed by the host TDP2, thereby accelerating replication. During the late stage of the replication cycle, host TDP2 is excluded from sites of viral RNA synthesis and encapsidation, allowing for the generation of progeny virions. Functionally, involved in the viral replication complex and viral polypeptide maturation. It exhibits protease activity with a specificity and catalytic efficiency that is different from protease 3C. Protein 3CD lacks polymerase activity. Protein 3CD binds to the 5'UTR of the viral genome. Major viral protease that mediates proteolytic processing of the polyprotein. Cleaves host EIF5B, contributing to host translation shutoff. Also cleaves host PABPC1, contributing to host translation shutoff. Cleaves and inhibits host RIGI, thereby inhibiting the type-I IFN production and the establishment of the antiviral state. Cleaves and inhibits host MAVS, thereby inhibiting the type-I IFN production and the establishment of the antiviral state. Cleaves and inhibits host TICAM1/TRIF, thereby inhibiting the type-I IFN production. Cleaves host NLRP1, triggers host N-glycine-mediated degradation of the autoinhibitory NLRP1 N-terminal fragment. Its function is as follows. Replicates the viral genomic RNA on the surface of intracellular membranes. May form linear arrays of subunits that propagate along a strong head-to-tail interaction called interface-I. Covalently attaches UMP to a tyrosine of VPg, which is used to prime RNA synthesis. The positive stranded RNA genome is first replicated at virus induced membranous vesicles, creating a dsRNA genomic replication form. This dsRNA is then used as template to synthesize positive stranded RNA genomes. ss(+)RNA genomes are either translated, replicated or encapsidated. In Homo sapiens (Human), this protein is Genome polyprotein.